Consider the following 329-residue polypeptide: Replication factor C small subunit 1 (329 aa).

44–51 (GPPGTGKT) contributes to the ATP binding site.

The protein belongs to the activator 1 small subunits family. RfcS subfamily. Heteromultimer composed of small subunits (RfcS) and large subunits (RfcL).

Functionally, part of the RFC clamp loader complex which loads the PCNA sliding clamp onto DNA. The sequence is that of Replication factor C small subunit 1 from Pyrobaculum arsenaticum (strain DSM 13514 / JCM 11321 / PZ6).